A 476-amino-acid polypeptide reads, in one-letter code: Aspartyl/glutamyl-tRNA(Asn/Gln) amidotransferase subunit B (476 aa).

It belongs to the GatB/GatE family. GatB subfamily. Heterotrimer of A, B and C subunits.

The catalysed reaction is L-glutamyl-tRNA(Gln) + L-glutamine + ATP + H2O = L-glutaminyl-tRNA(Gln) + L-glutamate + ADP + phosphate + H(+). It catalyses the reaction L-aspartyl-tRNA(Asn) + L-glutamine + ATP + H2O = L-asparaginyl-tRNA(Asn) + L-glutamate + ADP + phosphate + 2 H(+). Allows the formation of correctly charged Asn-tRNA(Asn) or Gln-tRNA(Gln) through the transamidation of misacylated Asp-tRNA(Asn) or Glu-tRNA(Gln) in organisms which lack either or both of asparaginyl-tRNA or glutaminyl-tRNA synthetases. The reaction takes place in the presence of glutamine and ATP through an activated phospho-Asp-tRNA(Asn) or phospho-Glu-tRNA(Gln). The protein is Aspartyl/glutamyl-tRNA(Asn/Gln) amidotransferase subunit B of Clostridium kluyveri (strain ATCC 8527 / DSM 555 / NBRC 12016 / NCIMB 10680 / K1).